The sequence spans 337 residues: Casein kinase I isoform alpha (337 aa).

A Protein kinase domain is found at 20–288 (YRVIRKIGSG…YLRQLFRILF (269 aa)). ATP contacts are provided by residues 26–34 (IGSGSFGDI) and Lys-49. Asp-139 serves as the catalytic Proton acceptor.

This sequence belongs to the protein kinase superfamily. CK1 Ser/Thr protein kinase family. Casein kinase I subfamily. Interacts with cos. Mg(2+) is required as a cofactor. Phosphorylated. The dephosphorylated kinase is active in the cytoplasm while the active kinase in the nucleus is phosphorylated.

It is found in the cytoplasm. Its subcellular location is the nucleus. It carries out the reaction L-seryl-[protein] + ATP = O-phospho-L-seryl-[protein] + ADP + H(+). The enzyme catalyses L-threonyl-[protein] + ATP = O-phospho-L-threonyl-[protein] + ADP + H(+). Activity increases following DNA damage. Casein kinases are operationally defined by their preferential utilization of acidic proteins such as caseins as substrates. Can phosphorylate a large number of proteins. Negative regulator of wg signaling. Phosphorylates arm directly or indirectly and stimulates its degradation which prevents inappropriate wg signaling. Phosphorylates smo which promotes its accumulation at the cell surface and its signaling activity in response to hh. Together with dco, regulates proteolytic processing of ci by phosphorylating it, which promotes its binding to slmb, the F-box recognition component of the SCF(slmb) E3 ubiquitin-protein ligase required for ci processing. Inhibits condensin II interphase activity by promoting degradation of the Cap-H2 regulatory subunit and limiting the levels of chromatin-bound Cap-H2 which regulates interphase chromosome organization. This is Casein kinase I isoform alpha (CkIalpha) from Drosophila melanogaster (Fruit fly).